The following is a 334-amino-acid chain: S-adenosylmethionine:tRNA ribosyltransferase-isomerase (334 aa).

Belongs to the QueA family. As to quaternary structure, monomer.

It is found in the cytoplasm. The enzyme catalyses 7-aminomethyl-7-carbaguanosine(34) in tRNA + S-adenosyl-L-methionine = epoxyqueuosine(34) in tRNA + adenine + L-methionine + 2 H(+). The protein operates within tRNA modification; tRNA-queuosine biosynthesis. Transfers and isomerizes the ribose moiety from AdoMet to the 7-aminomethyl group of 7-deazaguanine (preQ1-tRNA) to give epoxyqueuosine (oQ-tRNA). This Aquifex aeolicus (strain VF5) protein is S-adenosylmethionine:tRNA ribosyltransferase-isomerase.